Reading from the N-terminus, the 401-residue chain is Phosphoglycerate kinase, cytosolic (401 aa).

Positions 24, 25, 27, 41, 63, 64, 66, 67, 122, 154, and 155 each coordinate (2R)-3-phosphoglycerate. An ADP-binding site is contributed by Gly-200. Residue Gly-200 participates in CDP binding. 2 residues coordinate AMP: Lys-202 and Lys-206. Residue Lys-206 coordinates ATP. Gly-224 is an ADP binding site. Gly-224 provides a ligand contact to CDP. Gly-225 and Gly-297 together coordinate AMP. The ATP site is built by Gly-225 and Gly-297. Residues Gly-322 and Phe-327 each contribute to the CDP site. Residue Phe-327 coordinates ADP. AMP is bound at residue Glu-328. Residues Glu-328, Asp-359, and Ser-360 each coordinate ATP. Asp-359 provides a ligand contact to Mg(2+).

The protein belongs to the phosphoglycerate kinase family. As to quaternary structure, monomer. Mg(2+) is required as a cofactor.

It is found in the cytoplasm. The catalysed reaction is (2R)-3-phosphoglycerate + ATP = (2R)-3-phospho-glyceroyl phosphate + ADP. It participates in carbohydrate degradation; glycolysis; pyruvate from D-glyceraldehyde 3-phosphate: step 2/5. The protein is Phosphoglycerate kinase, cytosolic of Nicotiana tabacum (Common tobacco).